We begin with the raw amino-acid sequence, 232 residues long: Large ribosomal subunit protein uL1 (232 aa).

The protein belongs to the universal ribosomal protein uL1 family. In terms of assembly, part of the 50S ribosomal subunit.

Its function is as follows. Binds directly to 23S rRNA. The L1 stalk is quite mobile in the ribosome, and is involved in E site tRNA release. In terms of biological role, protein L1 is also a translational repressor protein, it controls the translation of the L11 operon by binding to its mRNA. The protein is Large ribosomal subunit protein uL1 of Burkholderia cenocepacia (strain HI2424).